The sequence spans 98 residues: Large ribosomal subunit protein uL23 (98 aa).

Belongs to the universal ribosomal protein uL23 family. In terms of assembly, part of the 50S ribosomal subunit. Contacts protein L29, and trigger factor when it is bound to the ribosome.

Functionally, one of the early assembly proteins it binds 23S rRNA. One of the proteins that surrounds the polypeptide exit tunnel on the outside of the ribosome. Forms the main docking site for trigger factor binding to the ribosome. This Alcanivorax borkumensis (strain ATCC 700651 / DSM 11573 / NCIMB 13689 / SK2) protein is Large ribosomal subunit protein uL23.